The primary structure comprises 207 residues: Thymidylate kinase (207 aa).

7-14 provides a ligand contact to ATP; that stretch reads GPEGAGKS.

Belongs to the thymidylate kinase family.

It carries out the reaction dTMP + ATP = dTDP + ADP. Phosphorylation of dTMP to form dTDP in both de novo and salvage pathways of dTTP synthesis. This chain is Thymidylate kinase, found in Pseudomonas putida (strain W619).